Consider the following 353-residue polypeptide: UDP-3-O-acylglucosamine N-acyltransferase (353 aa).

The active-site Proton acceptor is H242.

It belongs to the transferase hexapeptide repeat family. LpxD subfamily. Homotrimer.

It catalyses the reaction a UDP-3-O-[(3R)-3-hydroxyacyl]-alpha-D-glucosamine + a (3R)-hydroxyacyl-[ACP] = a UDP-2-N,3-O-bis[(3R)-3-hydroxyacyl]-alpha-D-glucosamine + holo-[ACP] + H(+). The protein operates within bacterial outer membrane biogenesis; LPS lipid A biosynthesis. Functionally, catalyzes the N-acylation of UDP-3-O-acylglucosamine using 3-hydroxyacyl-ACP as the acyl donor. Is involved in the biosynthesis of lipid A, a phosphorylated glycolipid that anchors the lipopolysaccharide to the outer membrane of the cell. In Pseudomonas paraeruginosa (strain DSM 24068 / PA7) (Pseudomonas aeruginosa (strain PA7)), this protein is UDP-3-O-acylglucosamine N-acyltransferase.